We begin with the raw amino-acid sequence, 330 residues long: Putative 4-hydroxythreonine-4-phosphate dehydrogenase (330 aa).

Residues H169, H213, and H263 each coordinate a divalent metal cation.

It belongs to the PdxA family. Homodimer. The cofactor is Zn(2+). Mg(2+) is required as a cofactor. Co(2+) serves as cofactor.

The protein resides in the cytoplasm. It catalyses the reaction 4-(phosphooxy)-L-threonine + NAD(+) = 3-amino-2-oxopropyl phosphate + CO2 + NADH. It functions in the pathway cofactor biosynthesis; pyridoxine 5'-phosphate biosynthesis; pyridoxine 5'-phosphate from D-erythrose 4-phosphate: step 4/5. Functionally, catalyzes the NAD(P)-dependent oxidation of 4-(phosphooxy)-L-threonine (HTP) into 2-amino-3-oxo-4-(phosphooxy)butyric acid which spontaneously decarboxylates to form 3-amino-2-oxopropyl phosphate (AHAP). This is Putative 4-hydroxythreonine-4-phosphate dehydrogenase from Novosphingobium aromaticivorans (Sphingomonas aromaticivorans).